Here is a 390-residue protein sequence, read N- to C-terminus: Phosphopentomutase (390 aa).

Residues D10, D284, H289, D325, H326, and H337 each coordinate Mn(2+).

The protein belongs to the phosphopentomutase family. Mn(2+) is required as a cofactor.

The protein localises to the cytoplasm. The enzyme catalyses 2-deoxy-alpha-D-ribose 1-phosphate = 2-deoxy-D-ribose 5-phosphate. The catalysed reaction is alpha-D-ribose 1-phosphate = D-ribose 5-phosphate. Its pathway is carbohydrate degradation; 2-deoxy-D-ribose 1-phosphate degradation; D-glyceraldehyde 3-phosphate and acetaldehyde from 2-deoxy-alpha-D-ribose 1-phosphate: step 1/2. Its function is as follows. Isomerase that catalyzes the conversion of deoxy-ribose 1-phosphate (dRib-1-P) and ribose 1-phosphate (Rib-1-P) to deoxy-ribose 5-phosphate (dRib-5-P) and ribose 5-phosphate (Rib-5-P), respectively. In Clostridioides difficile (strain 630) (Peptoclostridium difficile), this protein is Phosphopentomutase.